Reading from the N-terminus, the 514-residue chain is MDEFHRYGKEDSSWQQCFLYPLFFQEDLYAISHDHYLDVSSSSEPMEHLSSNDKLSFLIVKRLIGQIRKQNNSIFLFVNCDPNPLVNHNKSSYSESVLEGLTLVLEVPFSIRSKYSVEGINEWKSFRSIHSIFPFLEDKFPHSNYILDTRIPYSIHPEILVRTFRRWIRDAPSLHPLRSVLYKYRNSPENLKRSIIVVPRVNTRFLLFLWNNYVYECESILVPLLKRSFHPRSSSYGSFPERTHFHRKVKHIIRNFRRNSLKSIWSLKDPKIHYVRYGERPIIAIRGTHLLVKKCRYHLPIFRQCYFHLWSEPYRVCSHQLSKNCSSSLGYSLRVRMKPLLVRTKMLDKLFITDLITDEFDPIVPIVPIIGLLAKEKFCDISGRPISKLSWTSLTDDDILDRFDRIWRNIFHYYSGSFGRDGLYRIKYILSLSCAKTLACKHKSTIRVVRKELGPELFKKYFSKEREFDYPAFSSKAAAHSQRERIWHSDIPQINPLANSWQKIQDLRIERKLI.

This sequence belongs to the intron maturase 2 family. MatK subfamily.

The protein resides in the plastid. It localises to the chloroplast. Usually encoded in the trnK tRNA gene intron. Probably assists in splicing its own and other chloroplast group II introns. This chain is Maturase K, found in Tsuga canadensis (Eastern hemlock).